We begin with the raw amino-acid sequence, 113 residues long: Iron-sulfur cluster insertion protein ErpA (113 aa).

3 residues coordinate iron-sulfur cluster: Cys41, Cys105, and Cys107.

The protein belongs to the HesB/IscA family. In terms of assembly, homodimer. Iron-sulfur cluster is required as a cofactor.

Its function is as follows. Required for insertion of 4Fe-4S clusters for at least IspG. This Histophilus somni (strain 2336) (Haemophilus somnus) protein is Iron-sulfur cluster insertion protein ErpA.